Reading from the N-terminus, the 264-residue chain is Methionine aminopeptidase (264 aa).

Histidine 79 provides a ligand contact to substrate. A divalent metal cation-binding residues include aspartate 97, aspartate 108, and histidine 171. Histidine 178 contacts substrate. Residues glutamate 204 and glutamate 235 each coordinate a divalent metal cation.

The protein belongs to the peptidase M24A family. Methionine aminopeptidase type 1 subfamily. As to quaternary structure, monomer. Co(2+) is required as a cofactor. Zn(2+) serves as cofactor. It depends on Mn(2+) as a cofactor. The cofactor is Fe(2+).

The catalysed reaction is Release of N-terminal amino acids, preferentially methionine, from peptides and arylamides.. Its function is as follows. Removes the N-terminal methionine from nascent proteins. The N-terminal methionine is often cleaved when the second residue in the primary sequence is small and uncharged (Met-Ala-, Cys, Gly, Pro, Ser, Thr, or Val). Requires deformylation of the N(alpha)-formylated initiator methionine before it can be hydrolyzed. The protein is Methionine aminopeptidase of Salmonella typhi.